The primary structure comprises 125 residues: Small ribosomal subunit protein uS11m (125 aa).

The protein belongs to the universal ribosomal protein uS11 family.

The protein resides in the mitochondrion. The protein is Small ribosomal subunit protein uS11m (RPS11) of Marchantia polymorpha (Common liverwort).